A 380-amino-acid chain; its full sequence is Succinate--CoA ligase [ADP-forming] subunit beta (380 aa).

Positions 9-236 (KGVFADAGIP…EAAGDELEAK (228 aa)) constitute an ATP-grasp domain. ATP is bound by residues K45, 52–54 (GRG), E91, V94, and E99. Residues N191 and D205 each coordinate Mg(2+). Substrate contacts are provided by residues N256 and 313–315 (GIT).

Belongs to the succinate/malate CoA ligase beta subunit family. As to quaternary structure, heterotetramer of two alpha and two beta subunits. It depends on Mg(2+) as a cofactor.

It carries out the reaction succinate + ATP + CoA = succinyl-CoA + ADP + phosphate. The catalysed reaction is GTP + succinate + CoA = succinyl-CoA + GDP + phosphate. It participates in carbohydrate metabolism; tricarboxylic acid cycle; succinate from succinyl-CoA (ligase route): step 1/1. Succinyl-CoA synthetase functions in the citric acid cycle (TCA), coupling the hydrolysis of succinyl-CoA to the synthesis of either ATP or GTP and thus represents the only step of substrate-level phosphorylation in the TCA. The beta subunit provides nucleotide specificity of the enzyme and binds the substrate succinate, while the binding sites for coenzyme A and phosphate are found in the alpha subunit. The sequence is that of Succinate--CoA ligase [ADP-forming] subunit beta from Natronomonas pharaonis (strain ATCC 35678 / DSM 2160 / CIP 103997 / JCM 8858 / NBRC 14720 / NCIMB 2260 / Gabara) (Halobacterium pharaonis).